Here is a 317-residue protein sequence, read N- to C-terminus: Protoheme IX farnesyltransferase (317 aa).

A run of 9 helical transmembrane segments spans residues 29 to 49 (LILL…QGRV), 53 to 73 (LLLI…TINC), 102 to 122 (VFLA…FANL), 123 to 143 (LSAC…THWL), 151 to 171 (IVIG…AVTG), 179 to 199 (VLFG…AMLI), 224 to 241 (IFLY…LVYP), 245 to 267 (VSWG…AWQL), and 283 to 303 (FSIL…LLLP).

This sequence belongs to the UbiA prenyltransferase family. Protoheme IX farnesyltransferase subfamily.

The protein resides in the cell inner membrane. It carries out the reaction heme b + (2E,6E)-farnesyl diphosphate + H2O = Fe(II)-heme o + diphosphate. Its pathway is porphyrin-containing compound metabolism; heme O biosynthesis; heme O from protoheme: step 1/1. In terms of biological role, converts heme B (protoheme IX) to heme O by substitution of the vinyl group on carbon 2 of heme B porphyrin ring with a hydroxyethyl farnesyl side group. In Thermosynechococcus vestitus (strain NIES-2133 / IAM M-273 / BP-1), this protein is Protoheme IX farnesyltransferase.